A 279-amino-acid chain; its full sequence is Formamidopyrimidine-DNA glycosylase (279 aa).

Catalysis depends on Pro2, which acts as the Schiff-base intermediate with DNA. The active-site Proton donor is Glu3. Residue Lys58 is the Proton donor; for beta-elimination activity of the active site. DNA-binding residues include His92, Arg111, and Arg153. Residues 238 to 272 (TVYGKEGQSCLSCSSTIIKTKHSGRSTFYCKTCQY) form an FPG-type zinc finger. Residue Arg262 is the Proton donor; for delta-elimination activity of the active site.

Belongs to the FPG family. Monomer. Requires Zn(2+) as cofactor.

It carries out the reaction Hydrolysis of DNA containing ring-opened 7-methylguanine residues, releasing 2,6-diamino-4-hydroxy-5-(N-methyl)formamidopyrimidine.. The catalysed reaction is 2'-deoxyribonucleotide-(2'-deoxyribose 5'-phosphate)-2'-deoxyribonucleotide-DNA = a 3'-end 2'-deoxyribonucleotide-(2,3-dehydro-2,3-deoxyribose 5'-phosphate)-DNA + a 5'-end 5'-phospho-2'-deoxyribonucleoside-DNA + H(+). In terms of biological role, involved in base excision repair of DNA damaged by oxidation or by mutagenic agents. Acts as a DNA glycosylase that recognizes and removes damaged bases. Has a preference for oxidized purines, such as 7,8-dihydro-8-oxoguanine (8-oxoG). Has AP (apurinic/apyrimidinic) lyase activity and introduces nicks in the DNA strand. Cleaves the DNA backbone by beta-delta elimination to generate a single-strand break at the site of the removed base with both 3'- and 5'-phosphates. This Rickettsia massiliae (strain Mtu5) protein is Formamidopyrimidine-DNA glycosylase.